Reading from the N-terminus, the 123-residue chain is cAMP-responsive element-binding protein-like 2 (123 aa).

The interval 1 to 24 (MDDSKVVGGKVKKPGKRGRKPAKI) is disordered. Over residues 10–21 (KVKKPGKRGRKP) the composition is skewed to basic residues. A bZIP domain is found at 23 to 86 (KIDLKAKLER…MAMDQGKIPS (64 aa)). Residues 29 to 60 (KLERSRQSARECRARKKLRYQYLEELVSSRER) are basic motif. Residues 62–69 (ICALREEL) are leucine-zipper. The disordered stretch occupies residues 92 to 123 (LTGEEQSKPQQNSSRHPKAGKTDANTNSLVGN). Over residues 114-123 (DANTNSLVGN) the composition is skewed to polar residues.

It belongs to the bZIP family. ATF subfamily. As to quaternary structure, interacts with CREB1; regulates CREB1 phosphorylation, stability and transcriptional activity. In terms of processing, phosphorylated by AMPK. In terms of tissue distribution, widely expressed with higher expression in adipose tissue, skeletal muscle, and liver (at protein level).

It localises to the nucleus. Its function is as follows. Probable regulator of CREB1 transcriptional activity which is involved in adipose cells differentiation. May also play a regulatory role in the cell cycle. The chain is cAMP-responsive element-binding protein-like 2 (Crebl2) from Mus musculus (Mouse).